The chain runs to 317 residues: L-lactate dehydrogenase (317 aa).

NAD(+)-binding positions include Val17, Asp38, Lys43, Tyr69, and 83–84 (GA). Substrate contacts are provided by Gln86 and Arg92. NAD(+) contacts are provided by residues Ser105, 122–124 (ATN), and Ser147. Position 124 to 127 (124 to 127 (NPVD)) interacts with substrate. 152-155 (DTAR) contributes to the substrate binding site. Beta-D-fructose 1,6-bisphosphate-binding residues include Arg157 and His172. His179 acts as the Proton acceptor in catalysis. Residue Tyr224 is modified to Phosphotyrosine. Residue Thr233 participates in substrate binding.

The protein belongs to the LDH/MDH superfamily. LDH family. As to quaternary structure, homotetramer.

The protein resides in the cytoplasm. The catalysed reaction is (S)-lactate + NAD(+) = pyruvate + NADH + H(+). Its pathway is fermentation; pyruvate fermentation to lactate; (S)-lactate from pyruvate: step 1/1. Allosterically activated by fructose 1,6-bisphosphate (FBP). Catalyzes the conversion of lactate to pyruvate. This is L-lactate dehydrogenase from Geobacillus kaustophilus (strain HTA426).